The primary structure comprises 296 residues: Light-inducible protein CPRF3 (296 aa).

Disordered regions lie at residues 1-27 (MSDG…ITTT), 98-165 (PNLA…GSLE), and 190-223 (RVND…KSDE). Basic and acidic residues predominate over residues 107–117 (VGRKISDEKGR). The segment covering 145 to 156 (SSSDNDCPSLSS) has biased composition (low complexity). In terms of domain architecture, bZIP spans 196–259 (ELKRQRRKQS…AEVTSENHSI (64 aa)). Residues 198 to 220 (KRQRRKQSNRESARRSRLRKQAK) are basic motif. Residues 224 to 245 (LQERLDNLSKENRILRKNLQRI) form a leucine-zipper region.

The protein belongs to the bZIP family. Binds DNA as a dimer.

The protein resides in the nucleus. Functionally, binds to the G-box-like motif (5'-ACGTGGC-3') of the chalcone synthase (CHS) gene promoter. G-box and G-box-like motifs are defined in promoters of certain plant genes which are regulated by such diverse stimuli as light-induction or hormone control. This Petroselinum crispum (Parsley) protein is Light-inducible protein CPRF3 (CPRF3).